The sequence spans 43 residues: Metallothionein-2 (43 aa).

The residue at position 1 (M1) is a Blocked amino end (Met).

This sequence belongs to the metallothionein superfamily. Type 5 family.

In terms of biological role, this protein binds cations of several transition elements. Thought to be involved in metal ion homeostasis. In Drosophila melanogaster (Fruit fly), this protein is Metallothionein-2 (MtnB).